Consider the following 387-residue polypeptide: Succinate--CoA ligase [ADP-forming] subunit beta (387 aa).

The 236-residue stretch at 9–244 folds into the ATP-grasp domain; it reads KEVLRKFGVA…LNEEEPSEIE (236 aa). ATP-binding positions include K46, 53–55, E99, C102, and E107; that span reads GRG. Residues N199 and D213 each contribute to the Mg(2+) site. Residues N264 and 321–323 contribute to the substrate site; that span reads GIM.

It belongs to the succinate/malate CoA ligase beta subunit family. As to quaternary structure, heterotetramer of two alpha and two beta subunits. Requires Mg(2+) as cofactor.

The enzyme catalyses succinate + ATP + CoA = succinyl-CoA + ADP + phosphate. It catalyses the reaction GTP + succinate + CoA = succinyl-CoA + GDP + phosphate. The protein operates within carbohydrate metabolism; tricarboxylic acid cycle; succinate from succinyl-CoA (ligase route): step 1/1. Succinyl-CoA synthetase functions in the citric acid cycle (TCA), coupling the hydrolysis of succinyl-CoA to the synthesis of either ATP or GTP and thus represents the only step of substrate-level phosphorylation in the TCA. The beta subunit provides nucleotide specificity of the enzyme and binds the substrate succinate, while the binding sites for coenzyme A and phosphate are found in the alpha subunit. The polypeptide is Succinate--CoA ligase [ADP-forming] subunit beta (Bdellovibrio bacteriovorus (strain ATCC 15356 / DSM 50701 / NCIMB 9529 / HD100)).